The primary structure comprises 162 residues: Phosphopantetheine adenylyltransferase (162 aa).

S11 contributes to the substrate binding site. Residues 11 to 12 and H19 each bind ATP; that span reads SF. 3 residues coordinate substrate: K43, V76, and R90. Residues 91-93, E101, and 126-132 each bind ATP; these read GLR and HLYISSS.

This sequence belongs to the bacterial CoaD family. Homohexamer. The cofactor is Mg(2+).

The protein localises to the cytoplasm. The catalysed reaction is (R)-4'-phosphopantetheine + ATP + H(+) = 3'-dephospho-CoA + diphosphate. Its pathway is cofactor biosynthesis; coenzyme A biosynthesis; CoA from (R)-pantothenate: step 4/5. Functionally, reversibly transfers an adenylyl group from ATP to 4'-phosphopantetheine, yielding dephospho-CoA (dPCoA) and pyrophosphate. The chain is Phosphopantetheine adenylyltransferase from Streptococcus pneumoniae (strain ATCC 700669 / Spain 23F-1).